The primary structure comprises 177 residues: uncharacterized protein (177 aa).

4 helical membrane-spanning segments follow: residues 20-42 (NLVSYAVGGILAIAGYVLILLAL), 62-84 (VVLWIIAVLIVIFAVGISFVSLS), 94-116 (AMSSFLVGVILFYILSVIGGYFI), and 136-158 (GLLYFIGTLLLIVIVGIIVIIVA).

The protein resides in the cell membrane. This is an uncharacterized protein from Methanocaldococcus jannaschii (strain ATCC 43067 / DSM 2661 / JAL-1 / JCM 10045 / NBRC 100440) (Methanococcus jannaschii).